We begin with the raw amino-acid sequence, 581 residues long: Adenine deaminase (581 aa).

Belongs to the metallo-dependent hydrolases superfamily. Adenine deaminase family. Requires Mn(2+) as cofactor.

It catalyses the reaction adenine + H2O + H(+) = hypoxanthine + NH4(+). This Brucella melitensis biotype 1 (strain ATCC 23456 / CCUG 17765 / NCTC 10094 / 16M) protein is Adenine deaminase.